The following is a 195-amino-acid chain: Nucleoside triphosphate pyrophosphatase (195 aa).

Catalysis depends on Asp70, which acts as the Proton acceptor.

This sequence belongs to the Maf family. Requires a divalent metal cation as cofactor.

Its subcellular location is the cytoplasm. It carries out the reaction a ribonucleoside 5'-triphosphate + H2O = a ribonucleoside 5'-phosphate + diphosphate + H(+). The catalysed reaction is a 2'-deoxyribonucleoside 5'-triphosphate + H2O = a 2'-deoxyribonucleoside 5'-phosphate + diphosphate + H(+). Functionally, nucleoside triphosphate pyrophosphatase. May have a dual role in cell division arrest and in preventing the incorporation of modified nucleotides into cellular nucleic acids. This chain is Nucleoside triphosphate pyrophosphatase, found in Synechocystis sp. (strain ATCC 27184 / PCC 6803 / Kazusa).